We begin with the raw amino-acid sequence, 2892 residues long: E3 ubiquitin-protein ligase lubel (2892 aa).

8 disordered regions span residues 23 to 55 (DRIG…KSTP), 125 to 252 (KQHM…QLEK), 395 to 423 (SQQH…QFGS), 483 to 631 (PSAA…ESEG), 644 to 672 (QKLQ…ENTQ), 685 to 737 (AHEE…PDHE), 757 to 865 (CCKT…DNSL), and 949 to 975 (DRFT…QQES). The span at 40–52 (GLPKAPALPPKAK) shows a compositional bias: low complexity. Residues 189–198 (GWRGSLGGGA) are compositionally biased toward gly residues. Polar residues predominate over residues 206-215 (ATSSANQMNN). Low complexity-rich tracts occupy residues 402–412 (AQHPHQALPQH) and 483–503 (PSAA…TPSR). The segment covering 516-528 (VDDELTDDEDSDQ) has biased composition (acidic residues). Residues 535–546 (VSNRSGMTSASR) show a composition bias toward polar residues. The span at 547–560 (SQHHQNHIQPRQRR) shows a compositional bias: basic residues. A compositionally biased stretch (polar residues) spans 606-623 (GTLTRNKTATDSARTSRI). Residues 647 to 670 (QEADQHKSSKKAEPKRKPEMKDEN) show a composition bias toward basic and acidic residues. Positions 801–813 (KPTTKSQQPSQKS) are enriched in polar residues. Composition is skewed to low complexity over residues 818-837 (SKTT…AVNS) and 846-856 (KTPSKSTLKTS). The region spanning 1042 to 1187 (MHIILKELEL…LMRIWGSPNG (146 aa)) is the UBA-like 1 domain. Disordered regions lie at residues 1214-1252 (LQPP…SPYQ), 1477-1520 (LPTA…KLET), 1557-1653 (AEVQ…KILS), 1717-2019 (STTI…NLSE), 2032-2082 (RDEI…EGNT), 2191-2316 (SAPP…PLRS), and 2411-2431 (DYET…EPQK). Residues 1241 to 1252 (VKSTYATPSPYQ) are compositionally biased toward polar residues. The segment covering 1510–1519 (EELRQQEKLE) has biased composition (basic and acidic residues). Over residues 1560–1571 (QVQSDDQPSTSR) the composition is skewed to polar residues. A compositionally biased stretch (basic residues) spans 1576 to 1587 (RAKRSQQSRKGR). The segment covering 1595 to 1607 (PTNRTKLPNNIDQ) has biased composition (polar residues). The segment covering 1608–1627 (KVNESKTAAKETEAVKDKDL) has biased composition (basic and acidic residues). 3 stretches are compositionally biased toward polar residues: residues 1630 to 1653 (AASN…KILS), 1717 to 1726 (STTISEQSEG), and 1764 to 1779 (KSPT…TSHI). A compositionally biased stretch (low complexity) spans 1822–1834 (LSSSSLRSESRSS). Polar residues predominate over residues 1859 to 1881 (TVSSPKSEQLSDNQEVNLVSQET). Over residues 1918-1927 (DSDEVFEDAP) the composition is skewed to acidic residues. Over residues 1953–1963 (DGQRAETKSPE) the composition is skewed to basic and acidic residues. 2 stretches are compositionally biased toward acidic residues: residues 1964-1975 (DEVVILLDEESQ) and 2036-2079 (SMDE…DGEE). Low complexity-rich tracts occupy residues 2214 to 2230 (PSEV…ALPI) and 2269 to 2291 (SGTA…TVSK). Positions 2297–2308 (NEPTNKSNSTPL) are enriched in polar residues. Residues 2411–2425 (DYETSATEEEQEEPN) are compositionally biased toward acidic residues. The 57-residue stretch at 2457–2513 (DPAILARKYVDQELVTNIAEAQIAATLVSMKFSEDVALWAARECSDLDQAIAMLQQE) folds into the UBA-like 2 domain. Residues 2510-2748 (LQQECELCMN…LGLHAHHPRN (239 aa)) form a TRIAD supradomain region. 14 residues coordinate Zn(2+): cysteine 2514, cysteine 2517, cysteine 2537, cysteine 2540, cysteine 2618, cysteine 2621, cysteine 2636, cysteine 2639, cysteine 2644, cysteine 2647, histidine 2655, cysteine 2660, cysteine 2690, and cysteine 2693. An RING-type 1 zinc finger spans residues 2514–2564 (CELCMNSYPMNQMVSMLKCLHKCCKQCAKSYFTVQITDRSINDCSCPFCKL). The tract at residues 2514–2892 (CELCMNSYPM…IKKHIPLKSA (379 aa)) is necessary for linear polyubiquitination and sufficent for inducing DptA in the intestine. The IBR-type zinc finger occupies 2601-2660 (QRKLRDRSLLQDPNFKWCIQCSSGFFARPKQKRLICPDCGSVTCAQCRKPWERQHEGSSC). The segment at 2690 to 2720 (CPKCKFRYSLARGGCMHFTCTQCKFEFCYGC) adopts an RING-type 2; atypical zinc-finger fold. The active site involves cysteine 2704. Zn(2+) contacts are provided by cysteine 2709 and cysteine 2712.

It belongs to the RBR family.

It carries out the reaction [E2 ubiquitin-conjugating enzyme]-S-ubiquitinyl-L-cysteine + [acceptor protein]-L-lysine = [E2 ubiquitin-conjugating enzyme]-L-cysteine + [acceptor protein]-N(6)-ubiquitinyl-L-lysine.. In terms of biological role, E3 ubiquitin-protein ligase which conjugates linear 'Met-1'- and 'Lys-63'-linked polyubiquitin chains to substrates and plays a crucial role in the NF-kappa-B intestinal inflammatory response to oral infection and in the heat stress response. Preferentially interacts with 'Lys-63'-linked, and to a lesser extent 'Lys-48'-linked, polyubiquitin chains. Upon oral infection with a Gram-negative bacterium E.carotovora subsp. carotovora 15, functions with the E2 ubiquitin-conjugating enzyme Ubc10 to mediate the conjugation of 'Lys-63'- and linear 'Met-1'-linked polyubiquitin chains to the substrate key which is essential for activation of the NF-kappa-B signaling cascade in the adult intestinal epithelium. It is not required for systemic immune response to septic infection with either E.carotovora subsp. carotovora 15 or Gram-positive M.luteus bacteria. Function in controlling linear ubiquitination is also essential for regulating the heat stress response in adults. This function may require the E2 ubiquitin-conjugating enzymes Ubc10 or eff. In Drosophila melanogaster (Fruit fly), this protein is E3 ubiquitin-protein ligase lubel.